The chain runs to 258 residues: Acetylglutamate kinase (258 aa).

Substrate contacts are provided by residues 41–42 (GG), Arg-63, and Asn-156.

The protein belongs to the acetylglutamate kinase family. ArgB subfamily.

Its subcellular location is the cytoplasm. The catalysed reaction is N-acetyl-L-glutamate + ATP = N-acetyl-L-glutamyl 5-phosphate + ADP. Its pathway is amino-acid biosynthesis; L-arginine biosynthesis; N(2)-acetyl-L-ornithine from L-glutamate: step 2/4. Its function is as follows. Catalyzes the ATP-dependent phosphorylation of N-acetyl-L-glutamate. In Geobacillus thermodenitrificans (strain NG80-2), this protein is Acetylglutamate kinase.